Here is a 339-residue protein sequence, read N- to C-terminus: MVREEVAGSTQTLQWKCVESRVDSKRLYYGRFILSPLRKGQADTVGIALRRALLGEIEGTCITRAKFGSVPHEYSTIAGIEESVQEILLNLKEIVLRSNLYGVRDASICVKGPRYITAQDIILPPSVEIVDTAQPIANLTEPIDFCIDLQIKRDRGYQTELRKNYQDGSYPIDAVSMPVRNVNYSIFSCGNGNEKHEILFLEIWTNGSLTPKEALYEASRNLIDLFLPFLHAEEEGTSFEENKNRFTPPLFTFQKRLTNLKKNKKGIPLNCIFIDQLELTSRTYNCLKRANIHTLLDLLSKTEEDLLRIDSFRMEDRKHIWDTLEKHLPIDLLKNKLSF.

The interval 1–233 (MVREEVAGST…DLFLPFLHAE (233 aa)) is alpha N-terminal domain (alpha-NTD). The interval 266-339 (GIPLNCIFID…IDLLKNKLSF (74 aa)) is alpha C-terminal domain (alpha-CTD).

It belongs to the RNA polymerase alpha chain family. In plastids the minimal PEP RNA polymerase catalytic core is composed of four subunits: alpha, beta, beta', and beta''. When a (nuclear-encoded) sigma factor is associated with the core the holoenzyme is formed, which can initiate transcription.

The protein localises to the plastid. It localises to the chloroplast. It catalyses the reaction RNA(n) + a ribonucleoside 5'-triphosphate = RNA(n+1) + diphosphate. DNA-dependent RNA polymerase catalyzes the transcription of DNA into RNA using the four ribonucleoside triphosphates as substrates. The polypeptide is DNA-directed RNA polymerase subunit alpha (Elymus canadensis (Canada wild rye)).